A 389-amino-acid polypeptide reads, in one-letter code: Large envelope protein (389 aa).

Residue Met1 is modified to N-acetylmethionine. Residue Gly2 is the site of N-myristoyl glycine; by host attachment. The tract at residues 2-108 (GTNLSVPNPL…PPLRDTHPQA (107 aa)) is pre-S1. Residues 2 to 163 (GTNLSVPNPL…LSTTGDPVPN (162 aa)) are pre-S. The Virion surface; in external conformation segment spans residues 2–170 (GTNLSVPNPL…VPNMENIASG (169 aa)). The Intravirion; in internal conformation segment spans residues 2–242 (GTNLSVPNPL…PGYRWMCLRR (241 aa)). Residues 109 to 163 (MQWNSTTFHQTLQDPRVRALYFPAGGSSSGTVNPVQNTASSISSILSTTGDPVPN) form a pre-S2 region. The chain crosses the membrane as a helical span at residues 171 to 191 (LLGPLLVLQAGFFSLTKILTI). At 192 to 242 (PLSLDSWWTSLNFLGETPVCLGQNSQSQISSHSPTCCPPICPGYRWMCLRR) the chain is on the intravirion; in external conformation side. Residues 243 to 263 (FIIFLCILLLCLIFLLVLLDY) form a helical membrane-spanning segment. Residues 264 to 337 (QGMLPVCPLI…WASVRFSWLS (74 aa)) are Virion surface-facing. Asn309 is a glycosylation site (N-linked (GlcNAc...) asparagine; by host). A helical membrane pass occupies residues 338–358 (LLVPFVQWFVGLSPTVWLSVI). Topologically, residues 359 to 364 (WMMWFW) are intravirion. The helical transmembrane segment at 365 to 387 (GPSLYNILSPFMPLLPIFFCLWV) threads the bilayer. The Virion surface segment spans residues 388 to 389 (YI).

The protein belongs to the orthohepadnavirus major surface antigen family. As to quaternary structure, interacts (via its myristoylated pre-S1 region) with the host SLC10A1/NTCP; this interaction is essential for viral entry. In terms of assembly, in its internal form (Li-HBsAg), interacts with the capsid protein and with the isoform S. Interacts with host chaperone CANX. Associates with host chaperone CANX through its pre-S2 N glycan; this association may be essential for isoform M proper secretion. As to quaternary structure, interacts with isoform L. Interacts with the antigens of satellite virus HDV (HDVAgs); this interaction is required for encapsidation of HDV genomic RNA. Isoform M is N-terminally acetylated by host at a ratio of 90%, and N-glycosylated by host at the pre-S2 region. Post-translationally, myristoylated; this modification is essential for its interaction with the host protein SLC10A1/NTCP.

The protein resides in the virion membrane. In terms of biological role, the large envelope protein exists in two topological conformations, one which is termed 'external' or Le-HBsAg and the other 'internal' or Li-HBsAg. In its external conformation the protein attaches the virus to cell receptors and thereby initiating infection. This interaction determines the species specificity and liver tropism. This attachment induces virion internalization predominantly through caveolin-mediated endocytosis. The large envelope protein also assures fusion between virion membrane and endosomal membrane. In its internal conformation the protein plays a role in virion morphogenesis and mediates the contact with the nucleocapsid like a matrix protein. Functionally, the middle envelope protein plays an important role in the budding of the virion. It is involved in the induction of budding in a nucleocapsid independent way. In this process the majority of envelope proteins bud to form subviral lipoprotein particles of 22 nm of diameter that do not contain a nucleocapsid. This chain is Large envelope protein, found in Hepatitis B virus genotype B2 (isolate Indonesia/pIDW420/1988) (HBV-B).